A 245-amino-acid polypeptide reads, in one-letter code: Thiopurine S-methyltransferase (245 aa).

S-adenosyl-L-methionine is bound at residue 29–40 (WQDKWVSHKIGF). Phe40 lines the substrate pocket. Lys58 is modified (N6-acetyllysine). Residues Leu69, Glu90, 134–135 (SI), and Arg152 contribute to the S-adenosyl-L-methionine site.

The protein belongs to the class I-like SAM-binding methyltransferase superfamily. TPMT family. Monomer.

The protein localises to the cytoplasm. The catalysed reaction is S-adenosyl-L-methionine + a thiopurine = S-adenosyl-L-homocysteine + a thiopurine S-methylether.. In Oryctolagus cuniculus (Rabbit), this protein is Thiopurine S-methyltransferase (TPMT).